Consider the following 460-residue polypeptide: Methylenetetrahydrofolate--tRNA-(uracil-5-)-methyltransferase TrmFO (460 aa).

12-17 contributes to the FAD binding site; it reads GGGLAG.

Belongs to the MnmG family. TrmFO subfamily. The cofactor is FAD.

It localises to the cytoplasm. The enzyme catalyses uridine(54) in tRNA + (6R)-5,10-methylene-5,6,7,8-tetrahydrofolate + NADH + H(+) = 5-methyluridine(54) in tRNA + (6S)-5,6,7,8-tetrahydrofolate + NAD(+). The catalysed reaction is uridine(54) in tRNA + (6R)-5,10-methylene-5,6,7,8-tetrahydrofolate + NADPH + H(+) = 5-methyluridine(54) in tRNA + (6S)-5,6,7,8-tetrahydrofolate + NADP(+). Catalyzes the folate-dependent formation of 5-methyl-uridine at position 54 (M-5-U54) in all tRNAs. The protein is Methylenetetrahydrofolate--tRNA-(uracil-5-)-methyltransferase TrmFO of Crocosphaera subtropica (strain ATCC 51142 / BH68) (Cyanothece sp. (strain ATCC 51142)).